The chain runs to 716 residues: Calpain clp-4 (716 aa).

The disordered stretch occupies residues 31–53; sequence DDDDKQEAPVAVSKAPKGKGSNH. A Calpain catalytic domain is found at 240–536; it reads LFEDPEFPAT…FTQMEVCNLT (297 aa). Catalysis depends on residues C295, H452, and N476.

Belongs to the peptidase C2 family.

Functionally, calcium-regulated non-lysosomal thiol-protease which catalyzes limited proteolysis of substrates. Promotes starvation-induced muscle atrophy. The sequence is that of Calpain clp-4 from Caenorhabditis elegans.